The sequence spans 512 residues: Maturase K (512 aa).

Belongs to the intron maturase 2 family. MatK subfamily.

It is found in the plastid. The protein localises to the chloroplast. In terms of biological role, usually encoded in the trnK tRNA gene intron. Probably assists in splicing its own and other chloroplast group II introns. The protein is Maturase K of Daucus carota (Wild carrot).